A 135-amino-acid polypeptide reads, in one-letter code: Lactoylglutathione lyase (135 aa).

A VOC domain is found at Arg-2–Ala-126. His-5 is a binding site for Ni(2+). Position 9 (Arg-9) interacts with substrate. Glu-56 is a Ni(2+) binding site. The substrate site is built by Asn-60 and His-74. Residues His-74 and Glu-122 each contribute to the Ni(2+) site. The active-site Proton donor/acceptor is the Glu-122.

Belongs to the glyoxalase I family. As to quaternary structure, homodimer. Requires Ni(2+) as cofactor.

It carries out the reaction (R)-S-lactoylglutathione = methylglyoxal + glutathione. It functions in the pathway secondary metabolite metabolism; methylglyoxal degradation; (R)-lactate from methylglyoxal: step 1/2. Functionally, catalyzes the conversion of hemimercaptal, formed from methylglyoxal and glutathione, to S-lactoylglutathione. The chain is Lactoylglutathione lyase (gloA) from Salmonella typhi.